The primary structure comprises 147 residues: MLSTKIDAENAENAAEIEMQFAVKAVEQAQIYWSLLEMRKGSELKLTKYDDEIFEDLINTFPEFKDPKTASFVNEDEMKSAKGKAAWRPFLMRYEKKVDDYNFGTLLRIKNTDEYEQETTIFVPRMQFLAYEIARNRYGLNDWIKKD.

This sequence belongs to the PBDC1 family.

It is found in the cytoplasm. Its subcellular location is the nucleus. The sequence is that of Protein PBDC1 homolog from Schizosaccharomyces pombe (strain 972 / ATCC 24843) (Fission yeast).